The primary structure comprises 484 residues: Protein nucleotidyltransferase YdiU (484 aa).

8 residues coordinate ATP: G81, G83, R84, K103, D115, G116, R166, and R173. The Proton acceptor role is filled by D244. N245 and D254 together coordinate Mg(2+). D254 lines the ATP pocket.

The protein belongs to the SELO family. The cofactor is Mg(2+). Requires Mn(2+) as cofactor.

The catalysed reaction is L-seryl-[protein] + ATP = 3-O-(5'-adenylyl)-L-seryl-[protein] + diphosphate. It catalyses the reaction L-threonyl-[protein] + ATP = 3-O-(5'-adenylyl)-L-threonyl-[protein] + diphosphate. It carries out the reaction L-tyrosyl-[protein] + ATP = O-(5'-adenylyl)-L-tyrosyl-[protein] + diphosphate. The enzyme catalyses L-histidyl-[protein] + UTP = N(tele)-(5'-uridylyl)-L-histidyl-[protein] + diphosphate. The catalysed reaction is L-seryl-[protein] + UTP = O-(5'-uridylyl)-L-seryl-[protein] + diphosphate. It catalyses the reaction L-tyrosyl-[protein] + UTP = O-(5'-uridylyl)-L-tyrosyl-[protein] + diphosphate. Nucleotidyltransferase involved in the post-translational modification of proteins. It can catalyze the addition of adenosine monophosphate (AMP) or uridine monophosphate (UMP) to a protein, resulting in modifications known as AMPylation and UMPylation. This chain is Protein nucleotidyltransferase YdiU, found in Shewanella putrefaciens (strain CN-32 / ATCC BAA-453).